Reading from the N-terminus, the 211-residue chain is Cytochrome c biogenesis ATP-binding export protein CcmA (211 aa).

One can recognise an ABC transporter domain in the interval 6–211 (LQTVALACER…RDIDLGNWAV (206 aa)). 38-45 (GPNGSGKT) is an ATP binding site.

It belongs to the ABC transporter superfamily. CcmA exporter (TC 3.A.1.107) family. As to quaternary structure, the complex is composed of two ATP-binding proteins (CcmA) and two transmembrane proteins (CcmB).

It localises to the cell inner membrane. The enzyme catalyses heme b(in) + ATP + H2O = heme b(out) + ADP + phosphate + H(+). In terms of biological role, part of the ABC transporter complex CcmAB involved in the biogenesis of c-type cytochromes; once thought to export heme, this seems not to be the case, but its exact role is uncertain. Responsible for energy coupling to the transport system. This Pseudomonas fluorescens (strain Pf0-1) protein is Cytochrome c biogenesis ATP-binding export protein CcmA.